The sequence spans 1916 residues: Endoribonuclease Dicer (1916 aa).

The Helicase ATP-binding domain maps to 51 to 227; that stretch reads LLEAALDHNT…ELEEKIQKLE (177 aa). 64–71 lines the ATP pocket; that stretch reads LNTGSGKT. Positions 175 to 178 match the DECH box motif; the sequence is DECH. The tract at residues 256-595 is required for interaction with PRKRA and TARBP2; it reads DCGPFTDRSG…LRNKCSKSAD (340 aa). The tract at residues 409–433 is disordered; it reads YVSWSDSEDDDDDEEIEEKEKPETN. Phosphoserine occurs at positions 413 and 415. The segment covering 414-425 has biased composition (acidic residues); that stretch reads DSEDDDDDEEIE. The region spanning 433–602 is the Helicase C-terminal domain; that stretch reads NFPSPFTNIL…SADGAEADVH (170 aa). Residues 630–722 enclose the Dicer dsRNA-binding fold domain; that stretch reads AIGHINRYCA…MPVGKETVKY (93 aa). A disordered region spans residues 726 to 745; sequence LDLHDEEETSVPGRPGSTKR. In terms of domain architecture, PAZ spans 895 to 1042; that stretch reads KFMEDIEKSE…LVPELCAIHP (148 aa). A phosphoserine mark is found at S1016 and S1160. Residues 1276-1403 enclose the RNase III 1 domain; that stretch reads DSEQSPSVGY…SEKWEKDEMT (128 aa). 3 residues coordinate Mg(2+): E1316, E1395, and E1398. Phosphoserine is present on residues S1456, S1464, and S1466. Residues 1598–1626 are disordered; the sequence is ALDPAQENGSSQQKSLSGSCAAPVGPRSS. Polar residues predominate over residues 1604 to 1615; the sequence is ENGSSQQKSLSG. In terms of domain architecture, RNase III 2 spans 1660–1818; it reads FETFEKKINY…LAGAIYMDSG (159 aa). Mg(2+)-binding residues include E1699, D1804, and E1807. Residues 1843–1908 form the DRBM domain; that stretch reads VPRSPVRELL…ARRALRSLKA (66 aa). Residue S1862 is modified to Phosphoserine.

It belongs to the helicase family. Dicer subfamily. Component of the RISC loading complex (RLC), or micro-RNA (miRNA) loading complex (miRLC), which is composed of DICER1, AGO2 and TARBP2; DICER1 and TARBP2 are required to process precursor miRNAs (pre-miRNAs) to mature miRNAs and then load them onto AGO2. Note that the trimeric RLC/miRLC is also referred to as RISC. Interacts with DHX9, AGO1, PIWIL1 and PRKRA. Interacts with AGO2, TARBP2, EIF6, MOV10 and RPL7A (60S ribosome subunit); they form a large RNA-induced silencing complex (RISC). Interacts with BCDIN3D. Interacts (via Dicer dsRNA-binding fold domain) with ALOX5 (via PLAT domain); this interaction enhances arachidonate 5-lipoxygenase activity and modifies the miRNA precursor processing activity of DICER1. Mg(2+) serves as cofactor. Requires Mn(2+) as cofactor. As to expression, isoform 1 is expressed in a wide variety of tissues. Isoform 2 is specifically expressed in oocytes during their growth (at protein level).

The protein localises to the cytoplasm. The catalysed reaction is Endonucleolytic cleavage to 5'-phosphomonoester.. Its function is as follows. Double-stranded RNA (dsRNA) endoribonuclease playing a central role in short dsRNA-mediated post-transcriptional gene silencing. Cleaves naturally occurring long dsRNAs and short hairpin pre-microRNAs (miRNA) into fragments of twenty-one to twenty-three nucleotides with 3' overhang of two nucleotides, producing respectively short interfering RNAs (siRNA) and mature microRNAs. SiRNAs and miRNAs serve as guide to direct the RNA-induced silencing complex (RISC) to complementary RNAs to degrade them or prevent their translation. Gene silencing mediated by siRNAs, also called RNA interference, controls the elimination of transcripts from mobile and repetitive DNA elements of the genome but also the degradation of exogenous RNA of viral origin for instance. The miRNA pathway on the other side is a mean to specifically regulate the expression of target genes. Functionally, more active than isoform 1 to process long double-stranded RNA into siRNAs. Responsible for the accumulation of endogenous siRNAs observed in mouse oocytes compared to somatic cells and it regulates meiotic spindle organization in female germline. The polypeptide is Endoribonuclease Dicer (Dicer1) (Mus musculus (Mouse)).